We begin with the raw amino-acid sequence, 499 residues long: Lysine--tRNA ligase (499 aa).

Residues Glu408 and Glu415 each contribute to the Mg(2+) site.

It belongs to the class-II aminoacyl-tRNA synthetase family. In terms of assembly, homodimer. Mg(2+) is required as a cofactor.

The protein localises to the cytoplasm. The catalysed reaction is tRNA(Lys) + L-lysine + ATP = L-lysyl-tRNA(Lys) + AMP + diphosphate. This chain is Lysine--tRNA ligase, found in Thermoanaerobacter sp. (strain X514).